We begin with the raw amino-acid sequence, 265 residues long: Mlc titration factor A (265 aa).

4 residues coordinate Zn(2+): His111, His148, His152, and Glu211.

Belongs to the MtfA family. As to quaternary structure, interacts with Mlc. The cofactor is Zn(2+).

It localises to the cytoplasm. Its function is as follows. Involved in the modulation of the activity of the glucose-phosphotransferase system (glucose-PTS). Interacts with the transcriptional repressor Mlc, preventing its interaction with DNA and leading to the modulation of expression of genes regulated by Mlc, including ptsG, which encodes the PTS system glucose-specific EIICB component. Shows zinc-dependent metallopeptidase activity. The sequence is that of Mlc titration factor A from Salmonella agona (strain SL483).